Consider the following 94-residue polypeptide: Co-chaperonin GroES (94 aa).

The protein belongs to the GroES chaperonin family. Heptamer of 7 subunits arranged in a ring. Interacts with the chaperonin GroEL.

The protein localises to the cytoplasm. Functionally, together with the chaperonin GroEL, plays an essential role in assisting protein folding. The GroEL-GroES system forms a nano-cage that allows encapsulation of the non-native substrate proteins and provides a physical environment optimized to promote and accelerate protein folding. GroES binds to the apical surface of the GroEL ring, thereby capping the opening of the GroEL channel. This chain is Co-chaperonin GroES, found in Brevibacillus brevis (strain 47 / JCM 6285 / NBRC 100599).